We begin with the raw amino-acid sequence, 370 residues long: Vasopressin V2 receptor (370 aa).

Positions 1–10 (MLLASTTSAV) are enriched in polar residues. Residues 1–26 (MLLASTTSAVPRTLSPPTPAGNGSRE) form a disordered region. Residues 1 to 37 (MLLASTTSAVPRTLSPPTPAGNGSRELLDTRDPLLVQ) lie on the Extracellular side of the membrane. N22 is a glycosylation site (N-linked (GlcNAc...) asparagine). A helical transmembrane segment spans residues 38–62 (AELALLSTVFVAVALSNGLVLGALA). Over 63 to 76 (RRVRRGRWAPMHVF) the chain is Cytoplasmic. Residues 77–97 (IGHLCLADLAVALFQVLPQLA) form a helical membrane-spanning segment. Residues 98–112 (WDATDRFRGPDALCR) lie on the Extracellular side of the membrane. A helical transmembrane segment spans residues 113–134 (AVKYLQMVGMYASSYMILAMTL). Residues 135–158 (DRHRAICRPMLAYRHGGGARWNRP) are Cytoplasmic-facing. A helical membrane pass occupies residues 159–179 (VLVAWAFSLILSLPQLFIFAQ). Residues 180–199 (RDVGNGSGVLDCWAHFAEPW) lie on the Extracellular side of the membrane. The chain crosses the membrane as a helical span at residues 200 to 219 (GLRAYVTWIALMVFVAPALG). Over 220-270 (IAACQVLIFREIHSSLVPGPAERAGGCRGGHRTGSPSEGARVSAAMAKTVR) the chain is Cytoplasmic. Residues 271 to 292 (MTLVIVIVYVLCWAPFFLVQLW) form a helical membrane-spanning segment. At 293–307 (AAWDPQAPLEGAPFV) the chain is on the extracellular side. Residues 308–327 (LLMLLASLNSCTNPWIYAFF) form a helical membrane-spanning segment. Residues 328–370 (SSSVSSELRSLFCWARSRAPPSLGPQEESCATASSFLAKDTSS) are Cytoplasmic-facing. C340 is lipidated: S-palmitoyl cysteine.

The protein belongs to the G-protein coupled receptor 1 family. Vasopressin/oxytocin receptor subfamily. As to quaternary structure, interacts with ARRDC4. Identified in a complex containing at least ARRDC4, V2R and HGS. Interacts with TMEM147.

The protein resides in the cell membrane. Functionally, receptor for arginine vasopressin. The activity of this receptor is mediated by G proteins which activate adenylate cyclase. Involved in renal water reabsorption. The polypeptide is Vasopressin V2 receptor (AVPR2) (Canis lupus familiaris (Dog)).